The following is a 132-amino-acid chain: 3'-dehydrocarminate deglycosidase beta subunit (132 aa).

Belongs to the C-glycoside deglycosidase beta subunit family. Heterodimer composed of an alpha subunit (CarB) and a beta subunit (CarC). Mg(2+) serves as cofactor.

The enzyme catalyses 3'-dehydrocarminate + H(+) = kermesate + 1,5-anhydro-D-erythro-hex-1-en-3-ulose. With respect to regulation, activity is strongly reduced in the presence of chelating agents. In terms of biological role, carbon-carbon bond-cleaving enzyme which participates in a carminate degradation pathway. Cleaves the C-C bond in 3'-dehydrocarminate to form kermesate. Also shows weak activity with other C-glycosides, such as 3''-dehydropuerarin (3''-oxo-puerarin), 3''-dehydroisoorientin (3''-oxo-homoorientin) and 3'-dehydromangiferin (3'-oxo-mangiferin). The polypeptide is 3'-dehydrocarminate deglycosidase beta subunit (Microbacterium sp).